The primary structure comprises 147 residues: Small ribosomal subunit protein uS12 (147 aa).

It belongs to the universal ribosomal protein uS12 family. As to quaternary structure, part of the 30S ribosomal subunit.

In terms of biological role, with S4 and S5 plays an important role in translational accuracy. Located at the interface of the 30S and 50S subunits. The sequence is that of Small ribosomal subunit protein uS12 from Ignicoccus hospitalis (strain KIN4/I / DSM 18386 / JCM 14125).